The chain runs to 287 residues: Eukaryotic translation initiation factor 3 subunit F (287 aa).

The region spanning 12-142 (VRVHPVVLFQ…IKAYVCVSLG (131 aa)) is the MPN domain.

It belongs to the eIF-3 subunit F family. Component of the eukaryotic translation initiation factor 3 (eIF-3) complex.

It localises to the cytoplasm. Functionally, component of the eukaryotic translation initiation factor 3 (eIF-3) complex, which is involved in protein synthesis of a specialized repertoire of mRNAs and, together with other initiation factors, stimulates binding of mRNA and methionyl-tRNAi to the 40S ribosome. The eIF-3 complex specifically targets and initiates translation of a subset of mRNAs involved in cell proliferation. This chain is Eukaryotic translation initiation factor 3 subunit F, found in Culex quinquefasciatus (Southern house mosquito).